The following is a 205-amino-acid chain: Holliday junction branch migration complex subunit RuvA (205 aa).

The domain I stretch occupies residues 1 to 64; that stretch reads MIGKLKGILE…EEAIRLFGFV (64 aa). The interval 65–143 is domain II; it reads AKAEQEWFCL…PFNDNALHFT (79 aa). A flexible linker region spans residues 144-149; sequence PQPHLE. The segment at 150 to 205 is domain III; it reads VTHQPTNDALSALVKLGFERDQAARALALAMNALEGETVSSALLIRHSLKLLSPST.

Belongs to the RuvA family. Homotetramer. Forms an RuvA(8)-RuvB(12)-Holliday junction (HJ) complex. HJ DNA is sandwiched between 2 RuvA tetramers; dsDNA enters through RuvA and exits via RuvB. An RuvB hexamer assembles on each DNA strand where it exits the tetramer. Each RuvB hexamer is contacted by two RuvA subunits (via domain III) on 2 adjacent RuvB subunits; this complex drives branch migration. In the full resolvosome a probable DNA-RuvA(4)-RuvB(12)-RuvC(2) complex forms which resolves the HJ.

Its subcellular location is the cytoplasm. The RuvA-RuvB-RuvC complex processes Holliday junction (HJ) DNA during genetic recombination and DNA repair, while the RuvA-RuvB complex plays an important role in the rescue of blocked DNA replication forks via replication fork reversal (RFR). RuvA specifically binds to HJ cruciform DNA, conferring on it an open structure. The RuvB hexamer acts as an ATP-dependent pump, pulling dsDNA into and through the RuvAB complex. HJ branch migration allows RuvC to scan DNA until it finds its consensus sequence, where it cleaves and resolves the cruciform DNA. This chain is Holliday junction branch migration complex subunit RuvA, found in Bartonella quintana (strain Toulouse) (Rochalimaea quintana).